Here is a 176-residue protein sequence, read N- to C-terminus: Large ribosomal subunit protein uL6 (176 aa).

This sequence belongs to the universal ribosomal protein uL6 family. In terms of assembly, part of the 50S ribosomal subunit.

In terms of biological role, this protein binds to the 23S rRNA, and is important in its secondary structure. It is located near the subunit interface in the base of the L7/L12 stalk, and near the tRNA binding site of the peptidyltransferase center. The sequence is that of Large ribosomal subunit protein uL6 from Dechloromonas aromatica (strain RCB).